Consider the following 335-residue polypeptide: RNA polymerase sigma factor RpoS (335 aa).

Residues 57–90 are sigma-70 factor domain-1; that stretch reads DATQMYLSEIGFSPLLTAEEEVLYARRALRGDEA. A sigma-70 factor domain-2 region spans residues 95 to 165; the sequence is MIESNLRLVV…ERALMNQTRT (71 aa). The Interaction with polymerase core subunit RpoC signature appears at 119 to 122; sequence DLIE. The interval 175-250 is sigma-70 factor domain-3; sequence ELNIYLRTAR…DSHNADPEFS (76 aa). The interval 263 to 316 is sigma-70 factor domain-4; the sequence is WLDELNPKQKEVLARRFGLLGYEPSTLEEVGREINLTRERVRQIQVEGLRRLRE. Positions 289-308 form a DNA-binding region, H-T-H motif; the sequence is LEEVGREINLTRERVRQIQV.

The protein belongs to the sigma-70 factor family. RpoS subfamily. As to quaternary structure, interacts with the RNA polymerase core enzyme.

The protein localises to the cytoplasm. Sigma factors are initiation factors that promote the attachment of RNA polymerase to specific initiation sites and are then released. This sigma factor is the master transcriptional regulator of the stationary phase and the general stress response. May be required for the persistence of V.cholerae in aquatic habitats. This Vibrio cholerae serotype O1 (strain ATCC 39315 / El Tor Inaba N16961) protein is RNA polymerase sigma factor RpoS.